We begin with the raw amino-acid sequence, 545 residues long: E3 ubiquitin-protein ligase ipaH9.8 (545 aa).

Positions 1–242 (MLPINNNFSL…YHGPRIYFSM (242 aa)) are interaction with target proteins. LRR repeat units follow at residues 57-77 (NSDE…NLPA), 78-99 (QITL…PVTL), 100-117 (KKLY…VLPP), 118-139 (ALES…PDSL), 140-157 (LTMN…SLPQ), 158-179 (ALKN…SEGN), 182-203 (VVRE…ILNL), and 205-228 (NECS…QRLT). Residues 243–250 (SDGQQNTL) form a linker region. Residues 251–545 (HRPLADAVTA…SENGSQLHHS (295 aa)) form an E3 ubiquitin-protein ligase catalytic domain region. Residues 253–545 (PLADAVTAWF…SENGSQLHHS (293 aa)) enclose the NEL domain. The active-site Glycyl thioester intermediate is the Cys337.

This sequence belongs to the LRR-containing bacterial E3 ligase family. Also interacts with human and mouse U2AF1 (U2AF35). Ubiquitinated in the presence of host E1 ubiquitin-activating enzyme, E2 ubiquitin-conjugating enzyme and ubiquitin.

It is found in the secreted. The protein resides in the host cytoplasm. Its subcellular location is the host nucleus. The enzyme catalyses S-ubiquitinyl-[E2 ubiquitin-conjugating enzyme]-L-cysteine + [acceptor protein]-L-lysine = [E2 ubiquitin-conjugating enzyme]-L-cysteine + N(6)-ubiquitinyl-[acceptor protein]-L-lysine.. Its activity is regulated as follows. Exists in an autoinhibited state in the absence of substrate protein, due to interactions of the leucine-rich repeats with NEL domain. Is activated upon binding to a substrate protein. In terms of biological role, effector E3 ubiquitin ligase that interferes with host's ubiquitination pathway and modulates the acute inflammatory responses, thus facilitating bacterial colonization within the host cell. Interacts with IKBKG (NEMO) and TNIP1 (ABIN-1), a ubiquitin-binding adapter protein, which results in TNIP1-dependent 'Lys-27'-linked polyubiquitination of IKBKG. Consequently, polyubiquitinated IKBKG undergoes proteasome-dependent degradation, which perturbs NF-kappa-B activation during bacterial infection. Mediates polyubiquitination of host U2AF1, leading to its proteasomal degradation. Catalyzes 'Lys-48'-linked polyubiquitination and subsequent degradation of a subset of host guanylate-binding proteins (GBP1, GBP2, GBP4 and GBP6), thereby suppressing host cell defense. In contrast, host GBP3 and GBP7 are not ubiquitinated by IpaH9.8. Uses UBE2D2 (UBCH5B) as an E2 ubiquitin-conjugating enzyme. The chain is E3 ubiquitin-protein ligase ipaH9.8 (ipaH9.8) from Shigella sonnei (strain Ss046).